A 337-amino-acid polypeptide reads, in one-letter code: Holliday junction branch migration complex subunit RuvB (337 aa).

Residues 4-186 are large ATPase domain (RuvB-L); sequence ADRLIAADNP…FGIVQRLEYY (183 aa). ATP contacts are provided by residues Ile-25, Arg-26, Gly-67, Lys-70, Thr-71, Thr-72, 133 to 135, Arg-176, Tyr-186, and Arg-223; that span reads EDY. A Mg(2+)-binding site is contributed by Thr-71. Residues 187 to 257 form a small ATPAse domain (RuvB-S) region; sequence KVEDLQHIVQ…IADKALNMLD (71 aa). Positions 260–337 are head domain (RuvB-H); it reads VRGFDYMDRK…LHFGIDKPDK (78 aa). 3 residues coordinate DNA: Arg-296, Arg-315, and Arg-320.

The protein belongs to the RuvB family. As to quaternary structure, homohexamer. Forms an RuvA(8)-RuvB(12)-Holliday junction (HJ) complex. HJ DNA is sandwiched between 2 RuvA tetramers; dsDNA enters through RuvA and exits via RuvB. An RuvB hexamer assembles on each DNA strand where it exits the tetramer. Each RuvB hexamer is contacted by two RuvA subunits (via domain III) on 2 adjacent RuvB subunits; this complex drives branch migration. In the full resolvosome a probable DNA-RuvA(4)-RuvB(12)-RuvC(2) complex forms which resolves the HJ.

The protein localises to the cytoplasm. The catalysed reaction is ATP + H2O = ADP + phosphate + H(+). Its function is as follows. The RuvA-RuvB-RuvC complex processes Holliday junction (HJ) DNA during genetic recombination and DNA repair, while the RuvA-RuvB complex plays an important role in the rescue of blocked DNA replication forks via replication fork reversal (RFR). RuvA specifically binds to HJ cruciform DNA, conferring on it an open structure. The RuvB hexamer acts as an ATP-dependent pump, pulling dsDNA into and through the RuvAB complex. RuvB forms 2 homohexamers on either side of HJ DNA bound by 1 or 2 RuvA tetramers; 4 subunits per hexamer contact DNA at a time. Coordinated motions by a converter formed by DNA-disengaged RuvB subunits stimulates ATP hydrolysis and nucleotide exchange. Immobilization of the converter enables RuvB to convert the ATP-contained energy into a lever motion, pulling 2 nucleotides of DNA out of the RuvA tetramer per ATP hydrolyzed, thus driving DNA branch migration. The RuvB motors rotate together with the DNA substrate, which together with the progressing nucleotide cycle form the mechanistic basis for DNA recombination by continuous HJ branch migration. Branch migration allows RuvC to scan DNA until it finds its consensus sequence, where it cleaves and resolves cruciform DNA. This chain is Holliday junction branch migration complex subunit RuvB, found in Aliivibrio fischeri (strain ATCC 700601 / ES114) (Vibrio fischeri).